Reading from the N-terminus, the 124-residue chain is uncharacterized protein (124 aa).

Its function is as follows. Not required for the biogenesis of c-type cytochromes. This is an uncharacterized protein from Rhodobacter capsulatus (strain ATCC BAA-309 / NBRC 16581 / SB1003).